Here is a 227-residue protein sequence, read N- to C-terminus: Ubiquitin domain-containing protein 1 (227 aa).

The span at 1-14 (MGGCVGRERAETRG) shows a compositional bias: basic and acidic residues. The interval 1 to 45 (MGGCVGRERAETRGRGSRTQRKRGGRNEPLKKDKPKWKSDYPMTE) is disordered. Residues 15–24 (RGSRTQRKRG) are compositionally biased toward basic residues. Over residues 25-39 (GRNEPLKKDKPKWKS) the composition is skewed to basic and acidic residues. Positions 150-225 (FQLKVRLSTG…IQVIVNQPAP (76 aa)) constitute a Ubiquitin-like domain.

In terms of biological role, may be involved in the regulation of cellular senescence through a positive feedback loop with TP53. In Danio rerio (Zebrafish), this protein is Ubiquitin domain-containing protein 1 (ubtd1).